A 262-amino-acid polypeptide reads, in one-letter code: Hemin import ATP-binding protein HmuV (262 aa).

In terms of domain architecture, ABC transporter spans 2-241 (IRASDISVRL…ETMEAVFGCR (240 aa)). 34 to 41 (GPNGSGKT) provides a ligand contact to ATP.

The protein belongs to the ABC transporter superfamily. Heme (hemin) importer (TC 3.A.1.14.5) family. In terms of assembly, the complex is composed of two ATP-binding proteins (HmuV), two transmembrane proteins (HmuU) and a solute-binding protein (HmuT).

The protein localises to the cell inner membrane. In terms of biological role, part of the ABC transporter complex HmuTUV involved in hemin import. Responsible for energy coupling to the transport system. The polypeptide is Hemin import ATP-binding protein HmuV (Rhizobium meliloti (strain 1021) (Ensifer meliloti)).